A 132-amino-acid polypeptide reads, in one-letter code: Fatty acid-binding protein 2 (132 aa).

Position 2 is an N-acetylserine (serine 2). Hexadecanoate is bound by residues glutamine 40 and 128–130 (RYY).

This sequence belongs to the calycin superfamily. Fatty-acid binding protein (FABP) family. In terms of assembly, monomer. As to expression, midgut.

It is found in the cytoplasm. Binds fatty acids in a 1:1 molar ratio. This chain is Fatty acid-binding protein 2 (MFB2), found in Manduca sexta (Tobacco hawkmoth).